Consider the following 689-residue polypeptide: Choline transporter-like 1 (689 aa).

A helical membrane pass occupies residues 23–43; sequence IFWLVVYILFWIALLVIAVFS. N134 carries N-linked (GlcNAc...) asparagine glycosylation. The next 2 membrane-spanning stretches (helical) occupy residues 199–219 and 233–255; these read FSDI…SLIF and IISW…VLWW. The N-linked (GlcNAc...) asparagine glycan is linked to N279. 2 helical membrane passes run 283 to 303 and 333 to 353; these read IYVL…VIYY and VLAF…IVCL. N375 and N389 each carry an N-linked (GlcNAc...) asparagine glycan. Transmembrane regions (helical) follow at residues 412 to 432, 461 to 481, 562 to 582, and 591 to 611; these read IYII…QLVI, LGSV…RLIL, LVLF…SILM, and FYMA…HIVL.

This sequence belongs to the CTL (choline transporter-like) family.

It localises to the membrane. In Aedes aegypti (Yellowfever mosquito), this protein is Choline transporter-like 1.